The following is a 530-amino-acid chain: C2H2-type transcription factor MSN2 (530 aa).

2 consecutive C2H2-type zinc fingers follow at residues 409-437 (FVCD…QEKP) and 438-465 (FECN…SGGA).

Its subcellular location is the nucleus. It is found in the cytoplasm. Functionally, transcription factor that acts as a key downstream transcription factor in the HOG1-MAPK pathway. Plays crucial roles in the regulation of dimorphism transition, aggravated pigmentation, conidiation, microsclerotia formation and subsequent virulence towards Spodoptera litura larvae. More specifically regulates the expression of genes involved in antioxidation, pigment biosynthesis and ion transport and storage. This Metarhizium rileyi (strain RCEF 4871) (Nomuraea rileyi) protein is C2H2-type transcription factor MSN2.